A 156-amino-acid chain; its full sequence is tRNA (cytidine(34)-2'-O)-methyltransferase (156 aa).

The S-adenosyl-L-methionine site is built by glycine 102, leucine 124, and serine 132.

This sequence belongs to the class IV-like SAM-binding methyltransferase superfamily. RNA methyltransferase TrmH family. TrmL subfamily. Homodimer.

The protein resides in the cytoplasm. The catalysed reaction is cytidine(34) in tRNA + S-adenosyl-L-methionine = 2'-O-methylcytidine(34) in tRNA + S-adenosyl-L-homocysteine + H(+). It carries out the reaction 5-carboxymethylaminomethyluridine(34) in tRNA(Leu) + S-adenosyl-L-methionine = 5-carboxymethylaminomethyl-2'-O-methyluridine(34) in tRNA(Leu) + S-adenosyl-L-homocysteine + H(+). Functionally, methylates the ribose at the nucleotide 34 wobble position in the two leucyl isoacceptors tRNA(Leu)(CmAA) and tRNA(Leu)(cmnm5UmAA). Catalyzes the methyl transfer from S-adenosyl-L-methionine to the 2'-OH of the wobble nucleotide. This Burkholderia cenocepacia (strain HI2424) protein is tRNA (cytidine(34)-2'-O)-methyltransferase.